The sequence spans 195 residues: dITP/XTP pyrophosphatase (195 aa).

Residue 7 to 12 (SSNKGK) coordinates substrate. 2 residues coordinate Mg(2+): Glu38 and Asp68. Asp68 (proton acceptor) is an active-site residue. Residues Ser69, 150–153 (FGYD), Lys173, and 178–179 (HR) contribute to the substrate site.

It belongs to the HAM1 NTPase family. In terms of assembly, homodimer. It depends on Mg(2+) as a cofactor.

It catalyses the reaction XTP + H2O = XMP + diphosphate + H(+). It carries out the reaction dITP + H2O = dIMP + diphosphate + H(+). The enzyme catalyses ITP + H2O = IMP + diphosphate + H(+). Functionally, pyrophosphatase that catalyzes the hydrolysis of nucleoside triphosphates to their monophosphate derivatives, with a high preference for the non-canonical purine nucleotides XTP (xanthosine triphosphate), dITP (deoxyinosine triphosphate) and ITP. Seems to function as a house-cleaning enzyme that removes non-canonical purine nucleotides from the nucleotide pool, thus preventing their incorporation into DNA/RNA and avoiding chromosomal lesions. This Nautilia profundicola (strain ATCC BAA-1463 / DSM 18972 / AmH) protein is dITP/XTP pyrophosphatase.